We begin with the raw amino-acid sequence, 216 residues long: Cytochrome c biogenesis ATP-binding export protein CcmA (216 aa).

Residues 18–216 (LQVEGLAGRR…AHARTLEISA (199 aa)) form the ABC transporter domain. Position 50-57 (50-57 (GHNGSGKT)) interacts with ATP.

Belongs to the ABC transporter superfamily. CcmA exporter (TC 3.A.1.107) family. As to quaternary structure, the complex is composed of two ATP-binding proteins (CcmA) and two transmembrane proteins (CcmB).

Its subcellular location is the cell inner membrane. The enzyme catalyses heme b(in) + ATP + H2O = heme b(out) + ADP + phosphate + H(+). Its function is as follows. Part of the ABC transporter complex CcmAB involved in the biogenesis of c-type cytochromes; once thought to export heme, this seems not to be the case, but its exact role is uncertain. Responsible for energy coupling to the transport system. This chain is Cytochrome c biogenesis ATP-binding export protein CcmA, found in Nitrosococcus oceani (strain ATCC 19707 / BCRC 17464 / JCM 30415 / NCIMB 11848 / C-107).